Consider the following 296-residue polypeptide: Probable endonuclease 4 (296 aa).

The Zn(2+) site is built by His-68, His-108, Glu-145, Asp-179, His-182, His-216, Asp-229, His-231, and Glu-261.

This sequence belongs to the AP endonuclease 2 family. Requires Zn(2+) as cofactor.

It catalyses the reaction Endonucleolytic cleavage to 5'-phosphooligonucleotide end-products.. Functionally, endonuclease IV plays a role in DNA repair. It cleaves phosphodiester bonds at apurinic or apyrimidinic (AP) sites, generating a 3'-hydroxyl group and a 5'-terminal sugar phosphate. This chain is Probable endonuclease 4, found in Geobacter sulfurreducens (strain ATCC 51573 / DSM 12127 / PCA).